The sequence spans 466 residues: 3-isopropylmalate dehydratase large subunit (466 aa).

Positions 347, 407, and 410 each coordinate [4Fe-4S] cluster.

The protein belongs to the aconitase/IPM isomerase family. LeuC type 1 subfamily. Heterodimer of LeuC and LeuD. Requires [4Fe-4S] cluster as cofactor.

It carries out the reaction (2R,3S)-3-isopropylmalate = (2S)-2-isopropylmalate. It functions in the pathway amino-acid biosynthesis; L-leucine biosynthesis; L-leucine from 3-methyl-2-oxobutanoate: step 2/4. In terms of biological role, catalyzes the isomerization between 2-isopropylmalate and 3-isopropylmalate, via the formation of 2-isopropylmaleate. This Enterobacter sp. (strain 638) protein is 3-isopropylmalate dehydratase large subunit.